The primary structure comprises 59 residues: Large ribosomal subunit protein uL30 (59 aa).

The protein belongs to the universal ribosomal protein uL30 family. As to quaternary structure, part of the 50S ribosomal subunit.

The protein is Large ribosomal subunit protein uL30 of Geotalea daltonii (strain DSM 22248 / JCM 15807 / FRC-32) (Geobacter daltonii).